Consider the following 320-residue polypeptide: Ribose-phosphate pyrophosphokinase (320 aa).

41 to 43 contributes to the ATP binding site; the sequence is NDN. Mg(2+)-binding residues include His134 and Asp175. The active site involves Lys198. The D-ribose 5-phosphate site is built by Arg200 and Asp224.

The protein belongs to the ribose-phosphate pyrophosphokinase family. Class I subfamily. Homohexamer. Requires Mg(2+) as cofactor.

The protein resides in the cytoplasm. It catalyses the reaction D-ribose 5-phosphate + ATP = 5-phospho-alpha-D-ribose 1-diphosphate + AMP + H(+). The protein operates within metabolic intermediate biosynthesis; 5-phospho-alpha-D-ribose 1-diphosphate biosynthesis; 5-phospho-alpha-D-ribose 1-diphosphate from D-ribose 5-phosphate (route I): step 1/1. Functionally, involved in the biosynthesis of the central metabolite phospho-alpha-D-ribosyl-1-pyrophosphate (PRPP) via the transfer of pyrophosphoryl group from ATP to 1-hydroxyl of ribose-5-phosphate (Rib-5-P). This is Ribose-phosphate pyrophosphokinase from Deinococcus radiodurans (strain ATCC 13939 / DSM 20539 / JCM 16871 / CCUG 27074 / LMG 4051 / NBRC 15346 / NCIMB 9279 / VKM B-1422 / R1).